Reading from the N-terminus, the 210-residue chain is Outer-membrane lipoprotein carrier protein (210 aa).

Positions 1 to 23 are cleaved as a signal peptide; sequence MKKRIQKTILTVLFSSLSSIAFA.

This sequence belongs to the LolA family. In terms of assembly, monomer.

It localises to the periplasm. Functionally, participates in the translocation of lipoproteins from the inner membrane to the outer membrane. Only forms a complex with a lipoprotein if the residue after the N-terminal Cys is not an aspartate (The Asp acts as a targeting signal to indicate that the lipoprotein should stay in the inner membrane). The sequence is that of Outer-membrane lipoprotein carrier protein from Haemophilus ducreyi (strain 35000HP / ATCC 700724).